We begin with the raw amino-acid sequence, 102 residues long: Urease subunit beta (102 aa).

It belongs to the urease beta subunit family. As to quaternary structure, heterotrimer of UreA (gamma), UreB (beta) and UreC (alpha) subunits. Three heterotrimers associate to form the active enzyme.

The protein resides in the cytoplasm. It carries out the reaction urea + 2 H2O + H(+) = hydrogencarbonate + 2 NH4(+). Its pathway is nitrogen metabolism; urea degradation; CO(2) and NH(3) from urea (urease route): step 1/1. The sequence is that of Urease subunit beta from Methylobacillus flagellatus (strain ATCC 51484 / DSM 6875 / VKM B-1610 / KT).